Reading from the N-terminus, the 443-residue chain is MAETNSREEELLRRIQELELENEVLKKKVAEVEYDAKYPKIDENFCLDEYKRYGRQMIVPEFGSLKSQIKLKNSSILVVGAGGLGCPALLYLSAAGIGKIGIVDDDIVDISNLHRQVLHTTDSIGMFKCDSAKKYICKLNPHVIVKTYPVRLHNDNAFDIVNDYDIVLDCTDTPAIRYLINDVSVLCRKTIVSGSGLKSDGQLSILNFNNEGPCYRCFYPKPPSAESITTCSDGGVIGPCIGLLGVSMAVETIKVLTGFYTKDNFKPFLSMYTGYPQQSFRVFKMRGRSDKCSVCGSFPTVSKEAILNNEIDYVAFCGKVDSNVLTPEDRITVQQFSDIVTRQSKAPVLLDVRTKEQFQIAKLPNSINIEWDPTFKKLESLDKYLPEDFDKDTDPVFVVCRYGNDSQLATRKMKQELDFKNAKDIIGGLNKWSDIVNPKFPKY.

ATP is bound by residues Gly-83, Asp-104, 111–115, Lys-128, and 172–173; these read SNLHR and DT. Zn(2+) is bound by residues Cys-214 and Cys-217. Cys-231 serves as the catalytic Glycyl thioester intermediate; for adenylyltransferase activity. Positions 292 and 295 each coordinate Zn(2+). One can recognise a Rhodanese domain in the interval 343-441; that stretch reads QSKAPVLLDV…WSDIVNPKFP (99 aa). Cys-400 serves as the catalytic Cysteine persulfide intermediate; for sulfurtransferase activity.

It in the N-terminal section; belongs to the HesA/MoeB/ThiF family. UBA4 subfamily. Zn(2+) serves as cofactor.

It is found in the cytoplasm. Its subcellular location is the cytosol. The protein operates within tRNA modification; 5-methoxycarbonylmethyl-2-thiouridine-tRNA biosynthesis. Functionally, plays a central role in 2-thiolation of mcm(5)S(2)U at tRNA wobble positions of cytosolic tRNA(Lys), tRNA(Glu) and tRNA(Gln). Acts by mediating the C-terminal thiocarboxylation of sulfur carrier URM1. Its N-terminus first activates URM1 as acyl-adenylate (-COAMP), then the persulfide sulfur on the catalytic cysteine is transferred to URM1 to form thiocarboxylation (-COSH) of its C-terminus. The reaction probably involves hydrogen sulfide that is generated from the persulfide intermediate and that acts as a nucleophile towards URM1. Subsequently, a transient disulfide bond is formed. Does not use thiosulfate as sulfur donor; NFS1 probably acting as a sulfur donor for thiocarboxylation reactions. Prior mcm(5) tRNA modification by the elongator complex is required for 2-thiolation. May also be involved in protein urmylation. This Scheffersomyces stipitis (strain ATCC 58785 / CBS 6054 / NBRC 10063 / NRRL Y-11545) (Yeast) protein is Adenylyltransferase and sulfurtransferase UBA4.